Reading from the N-terminus, the 1227-residue chain is Multifunctional 2-oxoglutarate metabolism enzyme (1227 aa).

Residues 1–41 are 2-oxoglutarate dehydrogenase E1, N-terminal part; that stretch reads MSSSPSPFGQNEWLVEEMYRKFRDDPSSVDPSWHEFLVDYS. Positions 23 to 37 are enriched in basic and acidic residues; the sequence is RDDPSSVDPSWHEFL. The segment at 23-102 is disordered; sequence RDDPSSVDPS…SATPAKGDES (80 aa). Positions 42-88 are linker; sequence PEPTTDSASNGRTTTAAPVTPPTPAPAPAPEPKAAPKPAAKTEAKPA. Residues 43–53 are compositionally biased toward polar residues; it reads EPTTDSASNGR. Positions 60–76 are enriched in pro residues; the sequence is VTPPTPAPAPAPEPKAA. Over residues 88–97 the composition is skewed to low complexity; the sequence is AKPAKSATPA. Residues 89–335 form a succinyltransferase E2 region; that stretch reads KPAKSATPAK…LRTIHQLLLD (247 aa). Residue H314 is the Proton acceptor; for succinyltransferase activity of the active site. Residues 336–1227 are 2-oxoglutarate dehydrogenase E1, C-terminal part; sequence DDFFDEIFRE…QQEILDTAFG (892 aa). R540 lines the thiamine diphosphate pocket. 2-oxoglutarate is bound by residues H579 and S604. The thiamine diphosphate site is built by S604, L606, D645, A646, A647, and N678. Residue D645 coordinates Mg(2+). Positions 678 and 680 each coordinate Mg(2+). Residues 783–814 are a coiled coil; the sequence is DISMKEAEDALRDYQGQLERVFNEVRELEKHE. Residue H1020 coordinates 2-oxoglutarate. 7 residues coordinate acetyl-CoA: T1038, R1054, K1089, S1092, Q1142, R1149, and R1150.

It belongs to the 2-oxoacid dehydrogenase family. Kgd subfamily. As to quaternary structure, homodimer. Interacts with the FHA domain of unphosphorylated GarA. The 2-oxoglutarate dehydrogenase (ODH) complex contains multiple copies of three enzymatic components: 2-oxoglutarate dehydrogenase (E1), dihydrolipoamide succinyltransferase (E2) and lipoamide dehydrogenase (E3). Mg(2+) serves as cofactor. The cofactor is thiamine diphosphate.

It catalyses the reaction glyoxylate + 2-oxoglutarate + H(+) = 2-hydroxy-3-oxoadipate + CO2. The catalysed reaction is 2-oxoglutarate + H(+) = succinate semialdehyde + CO2. The enzyme catalyses N(6)-[(R)-lipoyl]-L-lysyl-[protein] + 2-oxoglutarate + H(+) = N(6)-[(R)-S(8)-succinyldihydrolipoyl]-L-lysyl-[protein] + CO2. It carries out the reaction N(6)-[(R)-dihydrolipoyl]-L-lysyl-[protein] + succinyl-CoA = N(6)-[(R)-S(8)-succinyldihydrolipoyl]-L-lysyl-[protein] + CoA. It participates in carbohydrate metabolism; tricarboxylic acid cycle; succinate from 2-oxoglutarate (transferase route): step 1/2. Its pathway is carbohydrate metabolism; tricarboxylic acid cycle; succinyl-CoA from 2-oxoglutarate (dehydrogenase route): step 1/1. Its activity is regulated as follows. Alpha-ketoglutarate dehydrogenase and decarboxylase activities are inhibited by unphosphorylated GarA, and allosterically activated by acetyl-CoA, the main substrate of the TCA cycle. Both the phosphoadenosine and acetyl moieties of acetyl-CoA are important for activation because neither CoA nor the synthetic compound S-(2-acetamidoethyl)-ethanethioate (which mimics the terminal acetyl-phosphopantetheine group of acetyl-CoA) has an activation effect. In terms of biological role, shows three enzymatic activities that share a first common step, the attack of thiamine-PP on 2-oxoglutarate (alpha-ketoglutarate, KG), leading to the formation of an enamine-thiamine-PP intermediate upon decarboxylation. Thus, displays KGD activity, catalyzing the decarboxylation from five-carbon 2-oxoglutarate to four-carbon succinate semialdehyde (SSA). Also catalyzes C-C bond formation between the activated aldehyde formed after decarboxylation of alpha-ketoglutarate and the carbonyl of glyoxylate (GLX), to yield 2-hydroxy-3-oxoadipate (HOA), which spontaneously decarboxylates to form 5-hydroxylevulinate (HLA). And is also a component of the 2-oxoglutarate dehydrogenase (ODH) complex, that catalyzes the overall conversion of 2-oxoglutarate to succinyl-CoA and CO(2). The KG decarboxylase and KG dehydrogenase reactions provide two alternative, tightly regulated, pathways connecting the oxidative and reductive branches of the TCA cycle. This is Multifunctional 2-oxoglutarate metabolism enzyme (kgd) from Mycolicibacterium smegmatis (strain ATCC 700084 / mc(2)155) (Mycobacterium smegmatis).